A 36-amino-acid polypeptide reads, in one-letter code: Photosystem I reaction center subunit VIII (36 aa).

Residues 9–29 form a helical membrane-spanning segment; that stretch reads IFVPLVGLVFPAIAMASLSLY.

The protein belongs to the PsaI family.

The protein localises to the plastid. It is found in the chloroplast thylakoid membrane. May help in the organization of the PsaL subunit. The sequence is that of Photosystem I reaction center subunit VIII from Phalaenopsis aphrodite subsp. formosana (Moth orchid).